The following is a 226-amino-acid chain: Glycerol-3-phosphate acyltransferase (226 aa).

Transmembrane regions (helical) follow at residues 1–21 (MGFWLSLCGAVVLVAYLLGSF), 60–80 (FVLGLDCLKGVLAIALVYYLF), 102–122 (LVTLAGIAAILGHSKSIFLGF), 134–154 (ILLAMNWQVGLATFGVFAVVV), 159–178 (IVSLSSIMGAIAVSIVMVFL), and 182–197 (LPYILFGIAGGLYVIL).

The protein belongs to the PlsY family. As to quaternary structure, probably interacts with PlsX.

It is found in the cell inner membrane. It catalyses the reaction an acyl phosphate + sn-glycerol 3-phosphate = a 1-acyl-sn-glycero-3-phosphate + phosphate. It functions in the pathway lipid metabolism; phospholipid metabolism. Functionally, catalyzes the transfer of an acyl group from acyl-phosphate (acyl-PO(4)) to glycerol-3-phosphate (G3P) to form lysophosphatidic acid (LPA). This enzyme utilizes acyl-phosphate as fatty acyl donor, but not acyl-CoA or acyl-ACP. The polypeptide is Glycerol-3-phosphate acyltransferase (Nostoc sp. (strain PCC 7120 / SAG 25.82 / UTEX 2576)).